The primary structure comprises 208 residues: Small ribosomal subunit protein uS4 (208 aa).

Positions 97-158 constitute an S4 RNA-binding domain; it reads TRLDNVIYRM…RAQKYLCVQE (62 aa).

It belongs to the universal ribosomal protein uS4 family. As to quaternary structure, part of the 30S ribosomal subunit. Contacts protein S5. The interaction surface between S4 and S5 is involved in control of translational fidelity.

In terms of biological role, one of the primary rRNA binding proteins, it binds directly to 16S rRNA where it nucleates assembly of the body of the 30S subunit. With S5 and S12 plays an important role in translational accuracy. This is Small ribosomal subunit protein uS4 from Xylella fastidiosa (strain 9a5c).